The following is a 72-amino-acid chain: Subtilisin-chymotrypsin inhibitor-2B (72 aa).

This sequence belongs to the protease inhibitor I13 (potato type I serine protease inhibitor) family.

Functionally, inhibits both subtilisin and chymotrypsin. The chain is Subtilisin-chymotrypsin inhibitor-2B from Hordeum vulgare (Barley).